Reading from the N-terminus, the 657-residue chain is UvrABC system protein B (657 aa).

The Helicase ATP-binding domain maps to 25–163 (ASIKNGNKYQ…QGMVLFLEIN (139 aa)). 38–45 (GVTGSGKT) is an ATP binding site. The Beta-hairpin signature appears at 91–114 (YYDYYQPEAYIPRQDLFIEKDSSI). A DEAD box motif is present at residues 130 to 133 (LSFD). One can recognise a Helicase C-terminal domain in the interval 433 to 599 (QVEILYDMAK…SVSRNVEESL (167 aa)). Positions 622–657 (AKIVKDLRKQMMEAADKLEFEKAAALRDEIKKMRKL) constitute a UVR domain.

This sequence belongs to the UvrB family. As to quaternary structure, forms a heterotetramer with UvrA during the search for lesions. Interacts with UvrC in an incision complex.

It localises to the cytoplasm. The UvrABC repair system catalyzes the recognition and processing of DNA lesions. A damage recognition complex composed of 2 UvrA and 2 UvrB subunits scans DNA for abnormalities. Upon binding of the UvrA(2)B(2) complex to a putative damaged site, the DNA wraps around one UvrB monomer. DNA wrap is dependent on ATP binding by UvrB and probably causes local melting of the DNA helix, facilitating insertion of UvrB beta-hairpin between the DNA strands. Then UvrB probes one DNA strand for the presence of a lesion. If a lesion is found the UvrA subunits dissociate and the UvrB-DNA preincision complex is formed. This complex is subsequently bound by UvrC and the second UvrB is released. If no lesion is found, the DNA wraps around the other UvrB subunit that will check the other stand for damage. This Campylobacter hominis (strain ATCC BAA-381 / DSM 21671 / CCUG 45161 / LMG 19568 / NCTC 13146 / CH001A) protein is UvrABC system protein B.